The sequence spans 215 residues: Small ribosomal subunit protein uS3 (215 aa).

In terms of domain architecture, KH type-2 spans 39 to 109; it reads IRKFIKKRLE…EVLVDVKEVK (71 aa).

The protein belongs to the universal ribosomal protein uS3 family. Part of the 30S ribosomal subunit. Forms a tight complex with proteins S10 and S14.

Its function is as follows. Binds the lower part of the 30S subunit head. Binds mRNA in the 70S ribosome, positioning it for translation. In Methylacidiphilum infernorum (isolate V4) (Methylokorus infernorum (strain V4)), this protein is Small ribosomal subunit protein uS3.